Here is a 533-residue protein sequence, read N- to C-terminus: Probable ADP-ribosylation factor-binding protein C25H2.16c (533 aa).

Positions Ala-15–Pro-151 constitute a VHS domain. The GAT domain maps to Arg-178–Glu-305. Ser-320 carries the post-translational modification Phosphoserine. A GAE domain is found at Asn-417–Leu-532.

The protein belongs to the GGA protein family.

Its subcellular location is the golgi apparatus. It is found in the trans-Golgi network. May play a role in the regulation of membrane traffic through the trans-Golgi network. The chain is Probable ADP-ribosylation factor-binding protein C25H2.16c from Schizosaccharomyces pombe (strain 972 / ATCC 24843) (Fission yeast).